We begin with the raw amino-acid sequence, 835 residues long: Invasin (835 aa).

The region spanning 451-541 (VITSEVTDDG…QQATVDVRFA (91 aa)) is the Big-1 domain.

The protein belongs to the intimin/invasin family.

It is found in the cell outer membrane. Invasin is a protein that allows enteric bacteria to penetrate cultured mammalian cells. The entry of invasin in the cell is mediated by binding several beta-1 chain integrins. In Yersinia enterocolitica, this protein is Invasin.